We begin with the raw amino-acid sequence, 517 residues long: Crotonobetaine/carnitine--CoA ligase (517 aa).

It belongs to the ATP-dependent AMP-binding enzyme family.

The enzyme catalyses 4-(trimethylamino)butanoate + ATP + CoA = 4-(trimethylamino)butanoyl-CoA + AMP + diphosphate. The catalysed reaction is crotonobetaine + ATP + CoA = crotonobetainyl-CoA + AMP + diphosphate. It carries out the reaction (R)-carnitine + ATP + CoA = (R)-carnitinyl-CoA + AMP + diphosphate. The protein operates within amine and polyamine metabolism; carnitine metabolism. Its function is as follows. Catalyzes the transfer of CoA to carnitine, generating the initial carnitinyl-CoA needed for the CaiB reaction cycle. Also has activity toward crotonobetaine and gamma-butyrobetaine. This is Crotonobetaine/carnitine--CoA ligase from Escherichia coli (strain ATCC 8739 / DSM 1576 / NBRC 3972 / NCIMB 8545 / WDCM 00012 / Crooks).